Here is a 125-residue protein sequence, read N- to C-terminus: Small ribosomal subunit protein uS12 (125 aa).

A 3-methylthioaspartic acid modification is found at aspartate 89.

It belongs to the universal ribosomal protein uS12 family. In terms of assembly, part of the 30S ribosomal subunit. Contacts proteins S8 and S17. May interact with IF1 in the 30S initiation complex.

In terms of biological role, with S4 and S5 plays an important role in translational accuracy. Its function is as follows. Interacts with and stabilizes bases of the 16S rRNA that are involved in tRNA selection in the A site and with the mRNA backbone. Located at the interface of the 30S and 50S subunits, it traverses the body of the 30S subunit contacting proteins on the other side and probably holding the rRNA structure together. The combined cluster of proteins S8, S12 and S17 appears to hold together the shoulder and platform of the 30S subunit. The chain is Small ribosomal subunit protein uS12 from Ralstonia nicotianae (strain ATCC BAA-1114 / GMI1000) (Ralstonia solanacearum).